The chain runs to 127 residues: uncharacterized protein (127 aa).

2 consecutive transmembrane segments (helical) span residues 13–35 and 57–81; these read ILLL…GIIF and AVLI…IMIW.

The protein localises to the cell membrane. This is an uncharacterized protein from Mycoplasma genitalium (strain ATCC 33530 / DSM 19775 / NCTC 10195 / G37) (Mycoplasmoides genitalium).